Reading from the N-terminus, the 397-residue chain is LIM/homeobox protein Lhx9 (397 aa).

2 LIM zinc-binding domains span residues 69-130 (ALCA…RFSV) and 131-193 (QRCA…LLQG). Disordered regions lie at residues 248 to 272 (ENEADHLDRDQQPYPPSQKTKRMRT), 330 to 365 (ENGGVDKADGTSLPAPPSADSGALTPPGTATTLTDL), and 378 to 397 (SNMDSHEPGSPSQTTLTNLF). A DNA-binding region (homeobox) is located at residues 267–326 (TKRMRTSFKHHQLRTMKSYFAINHNPDAKDLKQLAQKTGLTKRVLQVWFQNARAKFRRNL). Over residues 353–365 (LTPPGTATTLTDL) the composition is skewed to low complexity. Over residues 387–397 (SPSQTTLTNLF) the composition is skewed to polar residues.

In terms of assembly, interacts with LDB1 and LDB2. As to expression, expressed in the dorsal thalamus and inner nuclei of the cerebellum.

The protein resides in the nucleus. Involved in gonadal development. This is LIM/homeobox protein Lhx9 (Lhx9) from Mus musculus (Mouse).